A 362-amino-acid polypeptide reads, in one-letter code: Innexin-17 (362 aa).

A run of 4 helical transmembrane segments spans residues 27–47, 101–121, 189–209, and 266–286; these read YFTVFLLTSSAFFIMAKQYVG, WVPFILFGLAVVIYIPRVIWN, FLATILIFISMGFLDYFMGLG, and LFIALWWWYALLAILSIFDIF.

The protein belongs to the pannexin family.

The protein localises to the cell membrane. It is found in the cell junction. The protein resides in the gap junction. In terms of biological role, structural component of the gap junctions. The polypeptide is Innexin-17 (Caenorhabditis elegans).